An 86-amino-acid chain; its full sequence is Large ribosomal subunit protein bL31B (86 aa).

Belongs to the bacterial ribosomal protein bL31 family. Type B subfamily. In terms of assembly, part of the 50S ribosomal subunit.

The polypeptide is Large ribosomal subunit protein bL31B (Streptococcus equi subsp. zooepidemicus (strain H70)).